The primary structure comprises 238 residues: Probable 2-phosphosulfolactate phosphatase (238 aa).

It belongs to the ComB family. It depends on Mg(2+) as a cofactor.

The enzyme catalyses (2R)-O-phospho-3-sulfolactate + H2O = (2R)-3-sulfolactate + phosphate. The sequence is that of Probable 2-phosphosulfolactate phosphatase from Clostridium botulinum (strain Eklund 17B / Type B).